We begin with the raw amino-acid sequence, 517 residues long: Serine hydroxymethyltransferase 1, mitochondrial (517 aa).

A mitochondrion-targeting transit peptide spans 1–30 (MAMAMALRRLSSSIDKPIRPLIRSTSCYMS). At lysine 286 the chain carries N6-(pyridoxal phosphate)lysine.

It belongs to the SHMT family. In terms of assembly, homotetramer. Interacts with GLU1. Interacts with UBP16. Pyridoxal 5'-phosphate is required as a cofactor. Ubiquitinated. In terms of tissue distribution, ubiquitous. Mostly expressed in leaves, less abundant in stems, flowers and siliques, and barely detectable in roots.

The protein resides in the mitochondrion. The protein localises to the cytoplasm. It catalyses the reaction (6R)-5,10-methylene-5,6,7,8-tetrahydrofolate + glycine + H2O = (6S)-5,6,7,8-tetrahydrofolate + L-serine. It functions in the pathway one-carbon metabolism; tetrahydrofolate interconversion. Functions in the photorespiratory pathway in catalyzing the interconversion of serine and glycine. Involved in controlling cell damage caused by abiotic stress, such as high light and salt and the hypersensitive defense response of plants. This chain is Serine hydroxymethyltransferase 1, mitochondrial, found in Arabidopsis thaliana (Mouse-ear cress).